A 451-amino-acid chain; its full sequence is Phosphoglucosamine mutase (451 aa).

The Phosphoserine intermediate role is filled by serine 107. Mg(2+)-binding residues include serine 107, aspartate 246, aspartate 248, and aspartate 250. At serine 107 the chain carries Phosphoserine.

This sequence belongs to the phosphohexose mutase family. It depends on Mg(2+) as a cofactor. Post-translationally, activated by phosphorylation.

It catalyses the reaction alpha-D-glucosamine 1-phosphate = D-glucosamine 6-phosphate. Its function is as follows. Catalyzes the conversion of glucosamine-6-phosphate to glucosamine-1-phosphate. The protein is Phosphoglucosamine mutase of Burkholderia cenocepacia (strain HI2424).